The sequence spans 258 residues: Short-chain dehydrogenase reductase 3c (258 aa).

12-36 (IITGGASGIGADAARLFTDHGAKVV) provides a ligand contact to NAD(+). Position 144 (S144) interacts with substrate. Y156 acts as the Proton acceptor in catalysis.

This sequence belongs to the short-chain dehydrogenases/reductases (SDR) family.

This Arabidopsis thaliana (Mouse-ear cress) protein is Short-chain dehydrogenase reductase 3c (SDR3c).